A 451-amino-acid chain; its full sequence is Phosphoglucosamine mutase (451 aa).

The active-site Phosphoserine intermediate is the S101. Mg(2+) contacts are provided by S101, D242, D244, and D246. A Phosphoserine modification is found at S101.

It belongs to the phosphohexose mutase family. Mg(2+) is required as a cofactor. Activated by phosphorylation.

It catalyses the reaction alpha-D-glucosamine 1-phosphate = D-glucosamine 6-phosphate. In terms of biological role, catalyzes the conversion of glucosamine-6-phosphate to glucosamine-1-phosphate. The chain is Phosphoglucosamine mutase from Beijerinckia indica subsp. indica (strain ATCC 9039 / DSM 1715 / NCIMB 8712).